The chain runs to 372 residues: Aminomethyltransferase (372 aa).

Belongs to the GcvT family. As to quaternary structure, the glycine cleavage system is composed of four proteins: P, T, L and H.

It carries out the reaction N(6)-[(R)-S(8)-aminomethyldihydrolipoyl]-L-lysyl-[protein] + (6S)-5,6,7,8-tetrahydrofolate = N(6)-[(R)-dihydrolipoyl]-L-lysyl-[protein] + (6R)-5,10-methylene-5,6,7,8-tetrahydrofolate + NH4(+). The glycine cleavage system catalyzes the degradation of glycine. This chain is Aminomethyltransferase, found in Rubrobacter xylanophilus (strain DSM 9941 / JCM 11954 / NBRC 16129 / PRD-1).